Consider the following 96-residue polypeptide: Conglutin delta 4 (96 aa).

The N-terminal stretch at 1–22 (MARLTILIAFVAALVLVVHTSA) is a signal peptide. 2 cysteine pairs are disulfide-bonded: Cys-29-Cys-78 and Cys-80-Cys-91.

The protein belongs to the 2S seed storage albumins family.

It is found in the endoplasmic reticulum. The protein is Conglutin delta 4 of Lupinus angustifolius (Narrow-leaved blue lupine).